Reading from the N-terminus, the 538-residue chain is Atos homolog protein B (538 aa).

3 disordered regions span residues 1-99 (MRHV…PSTV), 165-185 (QGGQGCLGETPGPAPSGQLHT), and 199-270 (KSPV…GTLG). Residues 227-238 (HTPPGPGPPGPC) show a composition bias toward pro residues. Residues Ser254 and Ser255 each carry the phosphoserine modification. The required for macropage invasion stretch occupies residues 348–430 (LLGNFEESLL…VPKVGTIQVT (83 aa)). The tract at residues 436 to 444 (QTVVKMFLV) is transactivation domain 1 (TAD1).

Belongs to the ATOS family.

The protein resides in the nucleus. Transcription regulator that syncronizes transcriptional and translational programs to promote macrophage invasion of tissues. The polypeptide is Atos homolog protein B (Mus musculus (Mouse)).